The sequence spans 429 residues: Probable M18 family aminopeptidase 2 (429 aa).

Positions 82, 156, and 401 each coordinate Zn(2+).

It belongs to the peptidase M18 family. Zn(2+) is required as a cofactor.

This chain is Probable M18 family aminopeptidase 2, found in Pseudomonas fluorescens (strain SBW25).